Reading from the N-terminus, the 610-residue chain is Transcription termination factor Rho (610 aa).

The disordered stretch occupies residues 117-227; sequence EVSRRERRGA…GDGAEAELRQ (111 aa). Over residues 118-131 the composition is skewed to basic and acidic residues; sequence VSRRERRGASREAD. Positions 178–187 are enriched in polar residues; it reads GVEQQSSSLQ. Residues 189–198 show a composition bias toward basic and acidic residues; that stretch reads RGDDDGEGRQ. Over residues 199-214 the composition is skewed to basic residues; the sequence is GRRGRRFRDRDRRRRG. Residues 215–227 show a composition bias toward basic and acidic residues; that stretch reads ERSGDGAEAELRQ. In terms of domain architecture, Rho RNA-BD spans 231-309; the sequence is VQPVAGILDV…VRLDSINGGS (79 aa). Residues 352 to 357, 364 to 369, and R395 contribute to the ATP site; these read GKGQRA and KAGKTT.

This sequence belongs to the Rho family. In terms of assembly, homohexamer. The homohexamer assembles into an open ring structure.

Its function is as follows. Facilitates transcription termination by a mechanism that involves Rho binding to the nascent RNA, activation of Rho's RNA-dependent ATPase activity, and release of the mRNA from the DNA template. The chain is Transcription termination factor Rho from Mycobacterium leprae (strain TN).